Here is a 375-residue protein sequence, read N- to C-terminus: Erythronate-4-phosphate dehydrogenase (375 aa).

The substrate site is built by S45 and T66. NAD(+) contacts are provided by D146 and T175. The active site involves R208. D232 is a binding site for NAD(+). E237 is a catalytic residue. The active-site Proton donor is the H254. Residue G257 coordinates NAD(+). Y258 is a binding site for substrate.

This sequence belongs to the D-isomer specific 2-hydroxyacid dehydrogenase family. PdxB subfamily. Homodimer.

It is found in the cytoplasm. It carries out the reaction 4-phospho-D-erythronate + NAD(+) = (R)-3-hydroxy-2-oxo-4-phosphooxybutanoate + NADH + H(+). It functions in the pathway cofactor biosynthesis; pyridoxine 5'-phosphate biosynthesis; pyridoxine 5'-phosphate from D-erythrose 4-phosphate: step 2/5. Its function is as follows. Catalyzes the oxidation of erythronate-4-phosphate to 3-hydroxy-2-oxo-4-phosphonooxybutanoate. The polypeptide is Erythronate-4-phosphate dehydrogenase (Yersinia enterocolitica serotype O:8 / biotype 1B (strain NCTC 13174 / 8081)).